Reading from the N-terminus, the 416-residue chain is 2-amino-3-ketobutyrate coenzyme A ligase, mitochondrial (416 aa).

The transit peptide at 1–18 directs the protein to the mitochondrion; sequence MWASFMWHGALSPGRRAH. Lys-42 carries the N6-acetyllysine; alternate modification. Lys-42 is modified (N6-succinyllysine; alternate). Residue 131-132 participates in pyridoxal 5'-phosphate binding; the sequence is CF. His-156 lines the substrate pocket. N6-acetyllysine; alternate is present on Lys-184. Position 184 is an N6-succinyllysine; alternate (Lys-184). Pyridoxal 5'-phosphate contacts are provided by residues Ser-203, 259–262, and 292–293; these read TLGK and SN. Lys-262 is modified (N6-(pyridoxal phosphate)lysine). An N6-succinyllysine mark is found at Lys-323 and Lys-365. Lys-380 bears the N6-acetyllysine; alternate mark. Position 380 is an N6-succinyllysine; alternate (Lys-380). Arg-386 contacts substrate.

Belongs to the class-II pyridoxal-phosphate-dependent aminotransferase family. Pyridoxal 5'-phosphate is required as a cofactor.

It is found in the mitochondrion. It localises to the nucleus. It carries out the reaction glycine + acetyl-CoA = (2S)-2-amino-3-oxobutanoate + CoA. Its pathway is amino-acid degradation; L-threonine degradation via oxydo-reductase pathway; glycine from L-threonine: step 2/2. Pyridoxal phosphate (PLP) dependent enzyme, which catalyzes the cleavage of 2-amino-3-oxobutanoate to glycine and acetyl-CoA. Catalyzes the second reaction step on the main metabolic degradation pathway for L-threonine. In Mus musculus (Mouse), this protein is 2-amino-3-ketobutyrate coenzyme A ligase, mitochondrial (Gcat).